The following is a 101-amino-acid chain: Replication restart protein PriB (101 aa).

Positions 1–101 (MTTNNLVLAG…LHAENVELKT (101 aa)) constitute an SSB domain.

This sequence belongs to the PriB family. In terms of assembly, homodimer. Interacts with PriA and DnaT. Component of the replication restart primosome. Primosome assembly occurs via a 'hand-off' mechanism. PriA binds to replication forks, subsequently PriB then DnaT bind; DnaT then displaces ssDNA to generate the helicase loading substrate.

Its function is as follows. Involved in the restart of stalled replication forks, which reloads the replicative helicase on sites other than the origin of replication; the PriA-PriB pathway is the major replication restart pathway. During primosome assembly it facilitates complex formation between PriA and DnaT on DNA; stabilizes PriA on DNA. Stimulates the DNA unwinding activity of PriA helicase. The polypeptide is Replication restart protein PriB (Shewanella halifaxensis (strain HAW-EB4)).